The primary structure comprises 237 residues: B3 domain-containing protein Os03g0184500 (237 aa).

The segment at residues 137-228 is a DNA-binding region (TF-B3); that stretch reads FVKPMLHSHV…TFKVHIIRAT (92 aa).

Its subcellular location is the nucleus. In Oryza sativa subsp. japonica (Rice), this protein is B3 domain-containing protein Os03g0184500.